The sequence spans 392 residues: Ribosomal RNA large subunit methyltransferase G (392 aa).

Belongs to the methyltransferase superfamily. RlmG family.

The protein resides in the cytoplasm. The enzyme catalyses guanosine(1835) in 23S rRNA + S-adenosyl-L-methionine = N(2)-methylguanosine(1835) in 23S rRNA + S-adenosyl-L-homocysteine + H(+). Specifically methylates the guanine in position 1835 (m2G1835) of 23S rRNA. This is Ribosomal RNA large subunit methyltransferase G from Shewanella frigidimarina (strain NCIMB 400).